The sequence spans 109 residues: MRKQVLALSDTAAARIRQLLQHQQKPFLRLAVEAKGCNGLSYVLNYAQEKGKFDEVVEEKGVKILVDPKAVMHVIGTEMDFVDDKLRSEFVFVNPNATKCGCGESFTTT.

The transit peptide at 1–18 directs the protein to the mitochondrion; that stretch reads MRKQVLALSDTAAARIRQ. Residues Cys37, Cys100, and Cys102 each contribute to the Fe cation site.

The protein belongs to the HesB/IscA family. As to quaternary structure, homodimer; may form tetramers and higher multimers. Fe cation is required as a cofactor.

Its subcellular location is the mitochondrion. Involved in the assembly of mitochondrial iron-sulfur proteins. Probably involved in the binding of an intermediate of Fe/S cluster assembly. The chain is Iron-sulfur assembly protein IscA-like 3, mitochondrial from Arabidopsis thaliana (Mouse-ear cress).